A 177-amino-acid polypeptide reads, in one-letter code: MPGSLKEETALLLEDYFQHRAGGAALPPSATAAELRRAAAELERRERPFFRSCAPLARAEPREAAALLRKVAAQLETDGGLNWGRLLALVVFAGTLAAALAESACEEGPSRLAAALTAYLAEEQGEWMEEHGGWDGFCRFFGRHGSQPADQNSTLSNAIMAAAGFGIAGLAFLLVVR.

The BH1 motif lies at 75–94 (LETDGGLNWGRLLALVVFAG). The chain crosses the membrane as a helical span at residues 86–106 (LLALVVFAGTLAAALAESACE). The BH2 motif lies at 126–141 (EWMEEHGGWDGFCRFF). A helical transmembrane segment spans residues 156–176 (SNAIMAAAGFGIAGLAFLLVV).

It belongs to the Bcl-2 family. In terms of assembly, interacts with BAX. In terms of tissue distribution, mainly expressed in neural and muscular tissues.

Its subcellular location is the cell membrane. Its function is as follows. Shows anti-apoptotic properties. Counteract the pro-apoptotic activity of BAX. The polypeptide is Anti-apoptotic protein NR13 (NR13) (Coturnix japonica (Japanese quail)).